A 360-amino-acid polypeptide reads, in one-letter code: Arginase, non-hepatic 3 (360 aa).

The Mn(2+) site is built by histidine 122, aspartate 145, histidine 147, and aspartate 149. Substrate is bound by residues histidine 147–asparagine 151, serine 158–asparagine 160, and aspartate 204. The Mn(2+) site is built by aspartate 253 and aspartate 255. Residues threonine 267 and glutamate 298 each coordinate substrate.

Belongs to the arginase family. Homotrimer. It depends on Mn(2+) as a cofactor. As to expression, expressed at differing tadpole stages in tail, intestine, hindlimb and trunk region. Strongest in tadpole tail.

It catalyses the reaction L-arginine + H2O = urea + L-ornithine. Its pathway is nitrogen metabolism; urea cycle; L-ornithine and urea from L-arginine: step 1/1. Functionally, as well as its role in the urea cycle, may be involved in tissue remodeling. The protein is Arginase, non-hepatic 3 (arg2-c) of Xenopus laevis (African clawed frog).